The chain runs to 95 residues: Aspartyl/glutamyl-tRNA(Asn/Gln) amidotransferase subunit C (95 aa).

Belongs to the GatC family. Heterotrimer of A, B and C subunits.

The catalysed reaction is L-glutamyl-tRNA(Gln) + L-glutamine + ATP + H2O = L-glutaminyl-tRNA(Gln) + L-glutamate + ADP + phosphate + H(+). It catalyses the reaction L-aspartyl-tRNA(Asn) + L-glutamine + ATP + H2O = L-asparaginyl-tRNA(Asn) + L-glutamate + ADP + phosphate + 2 H(+). Functionally, allows the formation of correctly charged Asn-tRNA(Asn) or Gln-tRNA(Gln) through the transamidation of misacylated Asp-tRNA(Asn) or Glu-tRNA(Gln) in organisms which lack either or both of asparaginyl-tRNA or glutaminyl-tRNA synthetases. The reaction takes place in the presence of glutamine and ATP through an activated phospho-Asp-tRNA(Asn) or phospho-Glu-tRNA(Gln). In Acetivibrio thermocellus (strain ATCC 27405 / DSM 1237 / JCM 9322 / NBRC 103400 / NCIMB 10682 / NRRL B-4536 / VPI 7372) (Clostridium thermocellum), this protein is Aspartyl/glutamyl-tRNA(Asn/Gln) amidotransferase subunit C.